Reading from the N-terminus, the 670-residue chain is UvrABC system protein B (670 aa).

Positions 26-183 constitute a Helicase ATP-binding domain; it reads NGLKSGLAFQ…QRLVDLQYNR (158 aa). Position 39 to 46 (39 to 46) interacts with ATP; it reads GVTGSGKT. The Beta-hairpin motif lies at 92 to 115; it reads YYDYYQPEAYVPSSDSFIEKDAAI. The region spanning 431-597 is the Helicase C-terminal domain; it reads QVDDLLSEIN…GLSKQVNDVM (167 aa). In terms of domain architecture, UVR spans 630 to 665; the sequence is LKQIALSEKQMFACAKNLEFEKAALFRDEVTKLHEQ.

The protein belongs to the UvrB family. Forms a heterotetramer with UvrA during the search for lesions. Interacts with UvrC in an incision complex.

The protein resides in the cytoplasm. In terms of biological role, the UvrABC repair system catalyzes the recognition and processing of DNA lesions. A damage recognition complex composed of 2 UvrA and 2 UvrB subunits scans DNA for abnormalities. Upon binding of the UvrA(2)B(2) complex to a putative damaged site, the DNA wraps around one UvrB monomer. DNA wrap is dependent on ATP binding by UvrB and probably causes local melting of the DNA helix, facilitating insertion of UvrB beta-hairpin between the DNA strands. Then UvrB probes one DNA strand for the presence of a lesion. If a lesion is found the UvrA subunits dissociate and the UvrB-DNA preincision complex is formed. This complex is subsequently bound by UvrC and the second UvrB is released. If no lesion is found, the DNA wraps around the other UvrB subunit that will check the other stand for damage. The chain is UvrABC system protein B from Psychromonas ingrahamii (strain DSM 17664 / CCUG 51855 / 37).